Consider the following 693-residue polypeptide: Putative adenosylcobalamin-dependent ribonucleoside-triphosphate reductase (693 aa).

A disulfide bridge links Cys-90 with Cys-386. Catalysis depends on residues Cys-375 and Glu-377.

This sequence belongs to the class II ribonucleoside-triphosphate reductase family. Requires adenosylcob(III)alamin as cofactor.

The catalysed reaction is a 2'-deoxyribonucleoside 5'-triphosphate + [thioredoxin]-disulfide + H2O = a ribonucleoside 5'-triphosphate + [thioredoxin]-dithiol. In Mycobacterium phage D29 (Mycobacteriophage D29), this protein is Putative adenosylcobalamin-dependent ribonucleoside-triphosphate reductase (50).